The following is a 287-amino-acid chain: 23S rRNA (uridine(2479)-2'-O)-methyltransferase (287 aa).

S-adenosyl-L-methionine contacts are provided by residues 210-211 (TD), Gly-232, and 252-254 (IPM).

This sequence belongs to the class IV-like SAM-binding methyltransferase superfamily. RNA methyltransferase TsnR/AvirB family. In terms of assembly, homodimer.

The enzyme catalyses uridine(2479) in 23S rRNA + S-adenosyl-L-methionine = 2'-O-methyluridine(2479) in 23S rRNA + S-adenosyl-L-homocysteine + H(+). Functionally, specifically methylates the 2'-O-ribose position of uridine-2479 in 23S ribosomal RNA. Confers resistance to antibiotic avilamycin, an orthosomycin antibiotic. This Streptomyces viridochromogenes protein is 23S rRNA (uridine(2479)-2'-O)-methyltransferase (aviRb).